Consider the following 65-residue polypeptide: Large ribosomal subunit protein bL35 (65 aa).

It belongs to the bacterial ribosomal protein bL35 family.

In Oleidesulfovibrio alaskensis (strain ATCC BAA-1058 / DSM 17464 / G20) (Desulfovibrio alaskensis), this protein is Large ribosomal subunit protein bL35.